A 128-amino-acid polypeptide reads, in one-letter code: Protein Wnt-2b-B (128 aa).

2 disulfides stabilise this stretch: Cys-3–Cys-16 and Cys-5–Cys-11. Ser-8 is lipidated: O-palmitoleoyl serine; by PORCN. Asn-48 carries N-linked (GlcNAc...) asparagine glycosylation. Disulfide bonds link Cys-90/Cys-105 and Cys-127/Cys-128.

This sequence belongs to the Wnt family. In terms of processing, palmitoleoylation is required for efficient binding to frizzled receptors. Depalmitoleoylation leads to Wnt signaling pathway inhibition.

It is found in the secreted. It localises to the extracellular space. The protein localises to the extracellular matrix. In terms of biological role, ligand for members of the frizzled family of seven transmembrane receptors. Functions in the canonical Wnt/beta-catenin signaling pathway. In Xenopus laevis (African clawed frog), this protein is Protein Wnt-2b-B (wnt2b-b).